The sequence spans 871 residues: Metabotropic glutamate receptor 6 (871 aa).

A signal peptide spans M1–G23. Topologically, residues A24–W579 are extracellular. Cysteines 51 and 93 form a disulfide. Residues S148, A169–T171, and Y219 each bind L-glutamate. 7 cysteine pairs are disulfide-bonded: C238–C530, C361–C377, C417–C424, C512–C531, C516–C534, C537–C549, and C552–C565. N290 carries N-linked (GlcNAc...) asparagine glycosylation. D301 is an L-glutamate binding site. An L-glutamate-binding site is contributed by K394. 2 N-linked (GlcNAc...) asparagine glycosylation sites follow: N445 and N473. A glycan (N-linked (GlcNAc...) asparagine) is linked at N561. Residues A580–M602 traverse the membrane as a helical segment. Residues R603–E616 are Cytoplasmic-facing. Residues L617 to A637 form a helical membrane-spanning segment. Topologically, residues E638–R648 are extracellular. Residues L649–N667 traverse the membrane as a helical segment. Residues R668–Q691 are Cytoplasmic-facing. A helical transmembrane segment spans residues L692 to A712. Over Q713–D742 the chain is Extracellular. Residues L743–I764 form a helical membrane-spanning segment. Topologically, residues K765 to K777 are cytoplasmic. A helical membrane pass occupies residues P778–T800. Topologically, residues A801–T813 are extracellular. Residues L814 to F839 form a helical membrane-spanning segment. Over H840–K871 the chain is Cytoplasmic. The disordered stretch occupies residues R850–K871.

The protein belongs to the G-protein coupled receptor 3 family. In terms of assembly, homodimer. Interacts with GPR179. Interacts with photoreceptor synaptic protein LRIT1 (via its N-terminal extracellular domain). As to expression, restricted expression in the inner nuclear layer of the retina.

The protein resides in the cell membrane. Its subcellular location is the endoplasmic reticulum membrane. The protein localises to the golgi apparatus membrane. It is found in the cell projection. It localises to the dendrite. In terms of biological role, G-protein coupled receptor for glutamate. Ligand binding causes a conformation change that triggers signaling via guanine nucleotide-binding proteins (G proteins) and modulates the activity of down-stream effectors, such as adenylate cyclase. Signaling inhibits adenylate cyclase activity. Signaling stimulates TRPM1 channel activity and Ca(2+) uptake. Required for normal vision. The polypeptide is Metabotropic glutamate receptor 6 (Grm6) (Rattus norvegicus (Rat)).